A 690-amino-acid chain; its full sequence is Elongation factor G (690 aa).

One can recognise a tr-type G domain in the interval Ser-8–Ser-283. Residues Ala-17 to Thr-24, Asp-81 to His-85, and Asn-135 to Asp-138 contribute to the GTP site.

This sequence belongs to the TRAFAC class translation factor GTPase superfamily. Classic translation factor GTPase family. EF-G/EF-2 subfamily.

It is found in the cytoplasm. Catalyzes the GTP-dependent ribosomal translocation step during translation elongation. During this step, the ribosome changes from the pre-translocational (PRE) to the post-translocational (POST) state as the newly formed A-site-bound peptidyl-tRNA and P-site-bound deacylated tRNA move to the P and E sites, respectively. Catalyzes the coordinated movement of the two tRNA molecules, the mRNA and conformational changes in the ribosome. The chain is Elongation factor G from Anaplasma marginale (strain Florida).